Reading from the N-terminus, the 104-residue chain is Ig lambda-2 chain C region (104 aa).

Residues P6 to S99 enclose the Ig-like domain. A disulfide bond links C27 and C85.

This Mus musculus (Mouse) protein is Ig lambda-2 chain C region (Iglc2).